Reading from the N-terminus, the 444-residue chain is GTPase Der (444 aa).

EngA-type G domains follow at residues 2–167 (LKVA…LKEI) and 173–349 (FKFC…ENLN). Residues 8–15 (GKPNVGKS), 55–59 (DTGGL), 118–121 (NKSE), 179–186 (GRPNVGKS), 226–230 (DTAGI), and 291–294 (NKWD) contribute to the GTP site. One can recognise a KH-like domain in the interval 350–434 (LKFNSKILTD…PITLYFKNKT (85 aa)).

The protein belongs to the TRAFAC class TrmE-Era-EngA-EngB-Septin-like GTPase superfamily. EngA (Der) GTPase family. As to quaternary structure, associates with the 50S ribosomal subunit.

Functionally, GTPase that plays an essential role in the late steps of ribosome biogenesis. This Malacoplasma penetrans (strain HF-2) (Mycoplasma penetrans) protein is GTPase Der.